We begin with the raw amino-acid sequence, 44 residues long: MRISLLAVILALLFVACHETKKQILQNEADSTPSEKTIWQPEQK.

The first 16 residues, Met1–Ala16, serve as a signal peptide directing secretion.

This is an uncharacterized protein from Helicobacter pylori (strain ATCC 700392 / 26695) (Campylobacter pylori).